The following is a 39-amino-acid chain: Photosystem II reaction center protein J (39 aa).

A helical membrane pass occupies residues 7–27 (IPLWLVATIAGLGVIAVLGLF).

It belongs to the PsbJ family. In terms of assembly, PSII is composed of 1 copy each of membrane proteins PsbA, PsbB, PsbC, PsbD, PsbE, PsbF, PsbH, PsbI, PsbJ, PsbK, PsbL, PsbM, PsbT, PsbX, PsbY, PsbZ, Psb30/Ycf12, peripheral proteins PsbO, CyanoQ (PsbQ), PsbU, PsbV and a large number of cofactors. It forms dimeric complexes.

It localises to the cellular thylakoid membrane. One of the components of the core complex of photosystem II (PSII). PSII is a light-driven water:plastoquinone oxidoreductase that uses light energy to abstract electrons from H(2)O, generating O(2) and a proton gradient subsequently used for ATP formation. It consists of a core antenna complex that captures photons, and an electron transfer chain that converts photonic excitation into a charge separation. This chain is Photosystem II reaction center protein J, found in Microcystis aeruginosa (strain NIES-843 / IAM M-2473).